Consider the following 69-residue polypeptide: Small integral membrane protein 20 (69 aa).

The Mitochondrial matrix segment spans residues 1–8 (MAAARNLR). The helical transmembrane segment at 9–29 (TALIFGGFISMVGAAFYPIYF) threads the bilayer. The Mitochondrial intermembrane portion of the chain corresponds to 30-69 (RPLLRLEEYQKEQAVNRAGIVQEDVQPPGLKVWSDPFGRK). Phe66 carries the post-translational modification Phenylalanine amide.

As to quaternary structure, component of the MITRAC (mitochondrial translation regulation assembly intermediate of cytochrome c oxidase complex) complex, the core components of this complex being Coa3/Mitrac12 and Cox14. Interacts with Coa3/Mitrac12 and Cox4i1. Directly interacts with newly synthesized Mt-Co1/Cox1. As to expression, highly expressed in the hypothalamus, substantia nigra reticulata, Edinger-Westphal nucleus, and nucleus of the solitary tract/dorsal motor nucleus of the vagus, the spinal cord, and sensory ganglia (at protein level). Also expressed in the heart, thymus, esophagus, stomach, spleen, lung, pituitary gland, kidney, jejunum, duodenum, ileum, cerebrum, pons, and colon (at protein level). Expressed in preadipocytes and apidocytes (at protein level). Expressed in pancreatic islet cells (at protein level).

It localises to the mitochondrion inner membrane. The protein localises to the secreted. Component of the MITRAC (mitochondrial translation regulation assembly intermediate of cytochrome c oxidase complex) complex, that regulates cytochrome c oxidase assembly. Promotes the progression of complex assembly after the association of Mt-Co1/Cox11 with Cox4I1 and Cox6c. Chaperone-like assembly factor required to stabilize newly synthesized Mt-Co1/Cox1 and to prevent its premature turnover. Functionally, peptide involved in a broad spectrum of regulatory functions. Is a ligand for GPR173. As part of the reproductive cycle, it regulates gonadotropin-releasing hormone (GnRH) signaling in the hypothalamus and pituitary gland which augments the release of luteinizing hormone. More specifically, it regulates the expression of transcription factors CEBPB and POU2F1/OCT1 through the cAMP-PKA signaling pathway, which subsequently regulate the expression of GNRHR and KISS1. Plays a protective role in memory retention through activation of GNRHR. Regulates the secretion of AVP by hypothalamic neurons. Plays a role in the transduction of the itch sensation. Induces anxiolytic effects, reducing behavior associated with anxiety. Regulates food intake as well as satiation and satiety by increasing NUCB2 expression in neurons. In the ovary, it regulates follicular growth by stimulating granulosa cell proliferation by increasing the expression of GPR173, CREB1, CYP19A1, KITLG, FSHR, and LHCGR. It also increases the production of estradiol (E2). In the heart, it regulates contractility and relaxation by activating the AKT1-NOS3 and MAPK1-MAPK3 signaling pathways. It also plays a cardioprotective role during ischemia, where it activates the SAFE and RISK pathways. Stimulates the proliferation and differentiation of preadipocytes. In pancreatic islet cells, it induces proliferation of islet cells as well as the production of INS1 and INS2 through activation of the MAPK1-MAPK3 signaling pathways. The chain is Small integral membrane protein 20 from Rattus norvegicus (Rat).